The sequence spans 185 residues: Ribosome-recycling factor (185 aa).

The segment at 143–163 is disordered; the sequence is RKDGEAGEDEVARAEKDLDKS.

The protein belongs to the RRF family.

The protein resides in the cytoplasm. Its function is as follows. Responsible for the release of ribosomes from messenger RNA at the termination of protein biosynthesis. May increase the efficiency of translation by recycling ribosomes from one round of translation to another. This chain is Ribosome-recycling factor, found in Mycobacterium ulcerans (strain Agy99).